Reading from the N-terminus, the 155-residue chain is Ribosome maturation factor RimP (155 aa).

The protein belongs to the RimP family.

It is found in the cytoplasm. Functionally, required for maturation of 30S ribosomal subunits. This chain is Ribosome maturation factor RimP, found in Staphylococcus saprophyticus subsp. saprophyticus (strain ATCC 15305 / DSM 20229 / NCIMB 8711 / NCTC 7292 / S-41).